Here is an 842-residue protein sequence, read N- to C-terminus: Histidine biosynthesis trifunctional protein (842 aa).

Positions Met1–Phe275 are phosphoribosyl-AMP cyclohydrolase. Positions Cys276–Lys357 are phosphoribosyl-ATP pyrophosphohydrolase. A histidinol dehydrogenase region spans residues Tyr358–Ile842. The disordered stretch occupies residues Lys380–Ser403. Residues Glu390–Ser403 show a composition bias toward basic and acidic residues. Zn(2+) contacts are provided by Gln667 and His670. Residues Glu736 and His737 contribute to the active site. Asp769 and His828 together coordinate Zn(2+).

In the C-terminal section; belongs to the histidinol dehydrogenase family. Zn(2+) serves as cofactor.

The enzyme catalyses 1-(5-phospho-beta-D-ribosyl)-5'-AMP + H2O = 1-(5-phospho-beta-D-ribosyl)-5-[(5-phospho-beta-D-ribosylamino)methylideneamino]imidazole-4-carboxamide. It catalyses the reaction 1-(5-phospho-beta-D-ribosyl)-ATP + H2O = 1-(5-phospho-beta-D-ribosyl)-5'-AMP + diphosphate + H(+). The catalysed reaction is L-histidinol + 2 NAD(+) + H2O = L-histidine + 2 NADH + 3 H(+). The protein operates within amino-acid biosynthesis; L-histidine biosynthesis; L-histidine from 5-phospho-alpha-D-ribose 1-diphosphate: step 2/9. It participates in amino-acid biosynthesis; L-histidine biosynthesis; L-histidine from 5-phospho-alpha-D-ribose 1-diphosphate: step 3/9. Its pathway is amino-acid biosynthesis; L-histidine biosynthesis; L-histidine from 5-phospho-alpha-D-ribose 1-diphosphate: step 9/9. The sequence is that of Histidine biosynthesis trifunctional protein (HIS4) from Komagataella pastoris (Yeast).